The following is a 396-amino-acid chain: Cell division protein DivIB (396 aa).

2 disordered regions span residues 1–23 (MSKD…SEWQ) and 37–116 (EVAL…ATKE). Residues 1–130 (MSKDKKNEDK…AKIPGIHILR (130 aa)) are Cytoplasmic-facing. Composition is skewed to basic and acidic residues over residues 37–65 (EVAL…KQDQ) and 75–116 (ESAK…ATKE). A helical membrane pass occupies residues 131 to 151 (AFTILFPSLLLLIVSAYLLSP). The Extracellular portion of the chain corresponds to 152 to 396 (YATMKDIRVE…NQTNQRSSRR (245 aa)). The POTRA domain occupies 153 to 223 (ATMKDIRVEG…TKFTIKVKEY (71 aa)). A compositionally biased stretch (basic and acidic residues) spans 361 to 385 (KAKQEAKEAEKKQEEEQKKQEEESN). The tract at residues 361–396 (KAKQEAKEAEKKQEEEQKKQEEESNRNQTNQRSSRR) is disordered. The segment covering 386–396 (RNQTNQRSSRR) has biased composition (low complexity).

Belongs to the FtsQ/DivIB family. DivIB subfamily.

The protein resides in the cell membrane. Functionally, cell division protein that may be involved in stabilizing or promoting the assembly of the division complex. This chain is Cell division protein DivIB, found in Streptococcus pneumoniae (strain ATCC BAA-255 / R6).